Reading from the N-terminus, the 420-residue chain is Glucose-1-phosphate adenylyltransferase (420 aa).

Alpha-D-glucose 1-phosphate contacts are provided by residues tyrosine 107, glycine 172, 187–188, and serine 205; that span reads EK.

The protein belongs to the bacterial/plant glucose-1-phosphate adenylyltransferase family. In terms of assembly, homotetramer.

The catalysed reaction is alpha-D-glucose 1-phosphate + ATP + H(+) = ADP-alpha-D-glucose + diphosphate. It participates in glycan biosynthesis; glycogen biosynthesis. In terms of biological role, involved in the biosynthesis of ADP-glucose, a building block required for the elongation reactions to produce glycogen. Catalyzes the reaction between ATP and alpha-D-glucose 1-phosphate (G1P) to produce pyrophosphate and ADP-Glc. This chain is Glucose-1-phosphate adenylyltransferase, found in Rhizobium leguminosarum bv. trifolii (strain WSM2304).